Consider the following 41-residue polypeptide: Large ribosomal subunit protein bL36B (41 aa).

The protein belongs to the bacterial ribosomal protein bL36 family.

The sequence is that of Large ribosomal subunit protein bL36B from Vibrio campbellii (strain ATCC BAA-1116).